Reading from the N-terminus, the 2828-residue chain is Matrix-remodeling-associated protein 5 (2828 aa).

A signal peptide spans methionine 1 to alanine 26. The LRRNT domain maps to cysteine 27–lysine 55. 6 LRR repeats span residues histidine 56–glycine 77, lysine 80–aspartate 101, serine 104–glycine 125, asparagine 128–glycine 149, serine 152–threonine 173, and threonine 184–asparagine 205. The 61-residue stretch at asparagine 217 to lysine 277 folds into the LRRCT domain. Residues asparagine 287 and asparagine 321 are each glycosylated (N-linked (GlcNAc...) asparagine). 2 consecutive Ig-like C2-type domains span residues proline 481–leucine 571 and proline 575–threonine 669. Intrachain disulfides connect cysteine 501-cysteine 555 and cysteine 599-cysteine 651. A glycan (N-linked (GlcNAc...) asparagine) is linked at asparagine 633. Disordered stretches follow at residues lysine 671 to leucine 715, lysine 933 to proline 962, glutamine 1068 to isoleucine 1190, alanine 1204 to threonine 1275, and glutamate 1367 to glycine 1389. The segment covering isoleucine 695–glutamate 708 has biased composition (acidic residues). Serine 702 carries O-linked (Xyl...) (chondroitin sulfate) serine glycosylation. Residues serine 951–proline 962 show a composition bias toward low complexity. The segment covering serine 1090 to serine 1107 has biased composition (polar residues). The span at proline 1146–glutamine 1168 shows a compositional bias: basic residues. Polar residues-rich tracts occupy residues threonine 1169–isoleucine 1190 and alanine 1204–lysine 1214. Over residues threonine 1229–tyrosine 1243 the composition is skewed to basic residues. Residue asparagine 1403 is glycosylated (N-linked (GlcNAc...) asparagine). The stretch at leucine 1410 to glutamine 1434 is one LRR 7 repeat. Disordered stretches follow at residues glutamine 1479–isoleucine 1499, asparagine 1536–aspartate 1566, glutamine 1579–histidine 1603, serine 1669–aspartate 1689, and lysine 1700–serine 1719. The segment covering threonine 1542–aspartate 1566 has biased composition (polar residues). Asparagine 1735 is a glycosylation site (N-linked (GlcNAc...) asparagine). Ig-like C2-type domains follow at residues proline 1853–threonine 1946, proline 1950–histidine 2041, proline 2046–glutamine 2140, alanine 2146–valine 2239, proline 2242–threonine 2343, proline 2345–tryptophan 2432, proline 2440–threonine 2534, proline 2542–serine 2630, proline 2637–threonine 2722, and proline 2733–phenylalanine 2828. 2 disulfide bridges follow: cysteine 1875-cysteine 1928 and cysteine 1972-cysteine 2025. N-linked (GlcNAc...) asparagine glycans are attached at residues asparagine 2007 and asparagine 2056. Disulfide bonds link cysteine 2069/cysteine 2122, cysteine 2168/cysteine 2221, cysteine 2265/cysteine 2324, cysteine 2368/cysteine 2418, cysteine 2466/cysteine 2518, cysteine 2564/cysteine 2616, cysteine 2659/cysteine 2711, and cysteine 2755/cysteine 2810. Asparagine 2693 carries N-linked (GlcNAc...) asparagine glycosylation.

In terms of tissue distribution, detected in placenta (at protein level). Detected in cerebrospinal fluid and fibroblasts (at protein level). Highly expressed in kidney, also detected on liver and spleen. Expressed by proximal tubular cells of the kidney (at protein level). Expression highly increases during chronic kidney disease and autosomal dominant polycystic kidney disease, where is detected in cysts.

Its subcellular location is the secreted. In terms of biological role, in kidney, has anti-inflammatory and anti-fibrotic properties by limiting the induction of chemokines, fibronectin and collagen expression in response to TGB1 and pro-inflammatory stimuli. The polypeptide is Matrix-remodeling-associated protein 5 (MXRA5) (Homo sapiens (Human)).